Here is a 155-residue protein sequence, read N- to C-terminus: SsrA-binding protein (155 aa).

This sequence belongs to the SmpB family.

The protein localises to the cytoplasm. Functionally, required for rescue of stalled ribosomes mediated by trans-translation. Binds to transfer-messenger RNA (tmRNA), required for stable association of tmRNA with ribosomes. tmRNA and SmpB together mimic tRNA shape, replacing the anticodon stem-loop with SmpB. tmRNA is encoded by the ssrA gene; the 2 termini fold to resemble tRNA(Ala) and it encodes a 'tag peptide', a short internal open reading frame. During trans-translation Ala-aminoacylated tmRNA acts like a tRNA, entering the A-site of stalled ribosomes, displacing the stalled mRNA. The ribosome then switches to translate the ORF on the tmRNA; the nascent peptide is terminated with the 'tag peptide' encoded by the tmRNA and targeted for degradation. The ribosome is freed to recommence translation, which seems to be the essential function of trans-translation. This chain is SsrA-binding protein, found in Bacillus cereus (strain 03BB102).